The primary structure comprises 393 residues: Branched-chain-amino-acid aminotransferase, mitochondrial (393 aa).

The N-terminal 27 residues, 1 to 27 (MATAALRQIWIPRFLPVPWFLCGSRRY), are a transit peptide targeting the mitochondrion. Tyr169 is a binding site for substrate. Residue Lys230 is modified to N6-(pyridoxal phosphate)lysine. The residue at position 322 (Lys322) is an N6-acetyllysine.

It belongs to the class-IV pyridoxal-phosphate-dependent aminotransferase family. As to quaternary structure, homodimer. It depends on pyridoxal 5'-phosphate as a cofactor.

It is found in the mitochondrion. The enzyme catalyses L-leucine + 2-oxoglutarate = 4-methyl-2-oxopentanoate + L-glutamate. The catalysed reaction is L-isoleucine + 2-oxoglutarate = (S)-3-methyl-2-oxopentanoate + L-glutamate. It carries out the reaction L-valine + 2-oxoglutarate = 3-methyl-2-oxobutanoate + L-glutamate. Catalyzes the first reaction in the catabolism of the essential branched chain amino acids leucine, isoleucine, and valine. May also function as a transporter of branched chain alpha-keto acids. In Bos taurus (Bovine), this protein is Branched-chain-amino-acid aminotransferase, mitochondrial (BCAT2).